Consider the following 190-residue polypeptide: Lipid A acyltransferase PagP (190 aa).

The first 18 residues, 1-18, serve as a signal peptide directing secretion; sequence MKRLISCLTIICALNASA. Catalysis depends on residues histidine 60, aspartate 103, and serine 104.

It belongs to the lipid A palmitoyltransferase family. In terms of assembly, homodimer.

The protein resides in the cell outer membrane. It catalyses the reaction a lipid A + a 1,2-diacyl-sn-glycero-3-phosphocholine = a hepta-acyl lipid A + a 2-acyl-sn-glycero-3-phosphocholine. The catalysed reaction is a lipid IVA + a 1,2-diacyl-sn-glycero-3-phosphocholine = a lipid IVB + a 2-acyl-sn-glycero-3-phosphocholine. The enzyme catalyses a lipid IIA + a 1,2-diacyl-sn-glycero-3-phosphocholine = a lipid IIB + a 2-acyl-sn-glycero-3-phosphocholine. Its function is as follows. Transfers a fatty acid residue from the sn-1 position of a phospholipid to the N-linked hydroxyfatty acid chain on the proximal unit of lipid A or its precursors. The polypeptide is Lipid A acyltransferase PagP (Legionella pneumophila serogroup 1 (strain 2300/99 Alcoy)).